The primary structure comprises 625 residues: DNA mismatch repair protein MutL (625 aa).

The interval 404-427 (PPPRNAPQSTGMPSMAGTGLPATS) is disordered.

The protein belongs to the DNA mismatch repair MutL/HexB family.

Functionally, this protein is involved in the repair of mismatches in DNA. It is required for dam-dependent methyl-directed DNA mismatch repair. May act as a 'molecular matchmaker', a protein that promotes the formation of a stable complex between two or more DNA-binding proteins in an ATP-dependent manner without itself being part of a final effector complex. The chain is DNA mismatch repair protein MutL from Xanthomonas oryzae pv. oryzae (strain MAFF 311018).